Reading from the N-terminus, the 521-residue chain is Protein nucleotidyltransferase YdiU (521 aa).

Residues Gly109, Gly111, Arg112, Lys131, Asp143, Gly144, Arg194, and Arg201 each contribute to the ATP site. Asp270 serves as the catalytic Proton acceptor. Residues Asn271 and Asp280 each coordinate Mg(2+). Asp280 lines the ATP pocket.

Belongs to the SELO family. Mg(2+) serves as cofactor. It depends on Mn(2+) as a cofactor.

It catalyses the reaction L-seryl-[protein] + ATP = 3-O-(5'-adenylyl)-L-seryl-[protein] + diphosphate. It carries out the reaction L-threonyl-[protein] + ATP = 3-O-(5'-adenylyl)-L-threonyl-[protein] + diphosphate. The enzyme catalyses L-tyrosyl-[protein] + ATP = O-(5'-adenylyl)-L-tyrosyl-[protein] + diphosphate. The catalysed reaction is L-histidyl-[protein] + UTP = N(tele)-(5'-uridylyl)-L-histidyl-[protein] + diphosphate. It catalyses the reaction L-seryl-[protein] + UTP = O-(5'-uridylyl)-L-seryl-[protein] + diphosphate. It carries out the reaction L-tyrosyl-[protein] + UTP = O-(5'-uridylyl)-L-tyrosyl-[protein] + diphosphate. In terms of biological role, nucleotidyltransferase involved in the post-translational modification of proteins. It can catalyze the addition of adenosine monophosphate (AMP) or uridine monophosphate (UMP) to a protein, resulting in modifications known as AMPylation and UMPylation. The sequence is that of Protein nucleotidyltransferase YdiU from Burkholderia pseudomallei (strain K96243).